A 120-amino-acid chain; its full sequence is Small ribosomal subunit protein bS16 (120 aa).

A disordered region spans residues 84 to 120 (KRESRNNPQQGQPKKKAQERAAAAAAAAEKAASEAAA). Residues 103 to 120 (RAAAAAAAAEKAASEAAA) show a composition bias toward low complexity.

Belongs to the bacterial ribosomal protein bS16 family.

The sequence is that of Small ribosomal subunit protein bS16 from Beijerinckia indica subsp. indica (strain ATCC 9039 / DSM 1715 / NCIMB 8712).